A 1427-amino-acid polypeptide reads, in one-letter code: ATP-binding cassette transporter abc1 (1427 aa).

A helical membrane pass occupies residues 26-46 (LLLFYLSLFSLTNLFLIQKLF). N-linked (GlcNAc...) asparagine glycosylation is present at N49. 9 consecutive transmembrane segments (helical) span residues 63–83 (CLLE…SFYL), 87–107 (AVWW…NILS), 115–135 (LFSW…LISI), 155–175 (LLLP…PLFF), 197–217 (CSIF…WKSW), 262–282 (ILLM…TPLA), 298–318 (GNSP…ASVV), 345–367 (VLTS…YVYN), and 397–417 (MYFL…LAIL). Residues 262–549 (ILLMVFLSVL…LASVSRQFIQ (288 aa)) form the ABC transmembrane type-1 1 domain. N-linked (GlcNAc...) asparagine glycosylation occurs at N437. 2 consecutive transmembrane segments (helical) span residues 489–509 (IIFK…TFAI) and 513–533 (IMGH…FGLL). Residues N567, N581, and N601 are each glycosylated (N-linked (GlcNAc...) asparagine). Positions 579–807 (FENTSLSWSP…PSTFFSSNTK (229 aa)) constitute an ABC transporter 1 domain. A helical transmembrane segment spans residues 609 to 629 (FTLVVGSTGSGKSTLAMALLG). Residue 614-621 (GSTGSGKS) coordinates ATP. Residues N658 and N703 are each glycosylated (N-linked (GlcNAc...) asparagine). The helical transmembrane segment at 760–780 (IILFTHNVSLCLPIAENVIVL) threads the bilayer. N782 and N842 each carry an N-linked (GlcNAc...) asparagine glycan. Residues 862 to 1142 (ILGSILLVMM…FVRANNEILT (281 aa)) form the ABC transmembrane type-1 2 domain. 3 helical membrane passes run 866–886 (ILLV…IALW), 896–916 (LPSS…YFLM), and 973–993 (LLWA…ITML). A glycan (N-linked (GlcNAc...) asparagine) is linked at N994. The next 3 membrane-spanning stretches (helical) occupy residues 995–1015 (VTLV…LVYL), 1086–1106 (LAIR…LIAL), and 1114–1134 (GLVG…LVFV). 2 N-linked (GlcNAc...) asparagine glycosylation sites follow: N1161 and N1184. Residues 1180–1422 (VSIKNLTVSY…RRAFWKMCKE (243 aa)) form the ABC transporter 2 domain. 1214–1221 (GRTGSGKS) is an ATP binding site. The helical transmembrane segment at 1223 to 1243 (MGLTLLRFTMIMSGAVEVDGI) threads the bilayer. The N-linked (GlcNAc...) asparagine glycan is linked to N1324.

This sequence belongs to the ABC transporter superfamily. ABCC family. Conjugate transporter (TC 3.A.1.208) subfamily.

It localises to the membrane. The sequence is that of ATP-binding cassette transporter abc1 (abc1) from Schizosaccharomyces pombe (strain 972 / ATCC 24843) (Fission yeast).